A 119-amino-acid polypeptide reads, in one-letter code: Large ribosomal subunit protein bL20 (119 aa).

This sequence belongs to the bacterial ribosomal protein bL20 family.

Functionally, binds directly to 23S ribosomal RNA and is necessary for the in vitro assembly process of the 50S ribosomal subunit. It is not involved in the protein synthesizing functions of that subunit. The chain is Large ribosomal subunit protein bL20 from Dichelobacter nodosus (strain VCS1703A).